Here is a 401-residue protein sequence, read N- to C-terminus: Imidazolonepropionase (401 aa).

Fe(3+)-binding residues include His66 and His68. Zn(2+) is bound by residues His66 and His68. 4-imidazolone-5-propanoate is bound by residues Arg75, Tyr138, and His171. Residue Tyr138 coordinates N-formimidoyl-L-glutamate. His236 provides a ligand contact to Fe(3+). Residue His236 coordinates Zn(2+). Gln239 serves as a coordination point for 4-imidazolone-5-propanoate. A Fe(3+)-binding site is contributed by Asp311. Asp311 contacts Zn(2+). 2 residues coordinate N-formimidoyl-L-glutamate: Asn313 and Gly315. Thr316 serves as a coordination point for 4-imidazolone-5-propanoate.

The protein belongs to the metallo-dependent hydrolases superfamily. HutI family. It depends on Zn(2+) as a cofactor. Requires Fe(3+) as cofactor.

It is found in the cytoplasm. It carries out the reaction 4-imidazolone-5-propanoate + H2O = N-formimidoyl-L-glutamate. The protein operates within amino-acid degradation; L-histidine degradation into L-glutamate; N-formimidoyl-L-glutamate from L-histidine: step 3/3. Functionally, catalyzes the hydrolytic cleavage of the carbon-nitrogen bond in imidazolone-5-propanoate to yield N-formimidoyl-L-glutamate. It is the third step in the universal histidine degradation pathway. This chain is Imidazolonepropionase, found in Pseudomonas putida (strain ATCC 700007 / DSM 6899 / JCM 31910 / BCRC 17059 / LMG 24140 / F1).